A 1577-amino-acid chain; its full sequence is Probable serine/threonine-protein kinase gdt9 (1577 aa).

The first 16 residues, 1-16, serve as a signal peptide directing secretion; that stretch reads MKTFLLIFLLICVCKG. Residues 17–966 lie on the Extracellular side of the membrane; sequence ITNITTPSIY…NNEDNHKKLV (950 aa). A helical transmembrane segment spans residues 967 to 987; it reads IALSVSIPVAALLVILCFGIF. The Cytoplasmic portion of the chain corresponds to 988-1577; it reads ICYNNNKKNK…SLVKIFKRFN (590 aa). The segment covering 998–1014 has biased composition (basic and acidic residues); that stretch reads NETKGKDIETNTDKKDD. Disordered regions lie at residues 998-1019 and 1050-1128; these read NETKGKDIETNTDKKDDENENE and TLPP…FPTI. The segment covering 1050-1082 has biased composition (polar residues); it reads TLPPQSTISIDTSPSSENTTFTESLTPKKSATV. Positions 1091–1115 are enriched in low complexity; that stretch reads NSTNESTVSNSSSENNSDNNNNNNN. The region spanning 1290 to 1573 is the Protein kinase domain; it reads LDFDEICGQG…EIVFSLVKIF (284 aa). ATP is bound by residues 1296–1304 and lysine 1317; that span reads CGQGTYGMV. Aspartate 1436 (proton acceptor) is an active-site residue.

This sequence in the N-terminal section; belongs to the GDT family. It in the C-terminal section; belongs to the protein kinase superfamily. TKL Ser/Thr protein kinase family.

The protein localises to the membrane. It catalyses the reaction L-seryl-[protein] + ATP = O-phospho-L-seryl-[protein] + ADP + H(+). It carries out the reaction L-threonyl-[protein] + ATP = O-phospho-L-threonyl-[protein] + ADP + H(+). This is Probable serine/threonine-protein kinase gdt9 (gdt9) from Dictyostelium discoideum (Social amoeba).